The primary structure comprises 269 residues: Formamidopyrimidine-DNA glycosylase (269 aa).

Pro2 functions as the Schiff-base intermediate with DNA in the catalytic mechanism. The active-site Proton donor is Glu3. Lys57 serves as the catalytic Proton donor; for beta-elimination activity. DNA contacts are provided by His90, Arg109, and Lys150. Residues 235–269 (QVYGRKGEPCRICGMPVVGTKHAQRATFYCRQCQK) form an FPG-type zinc finger. Catalysis depends on Arg259, which acts as the Proton donor; for delta-elimination activity.

It belongs to the FPG family. In terms of assembly, monomer. The cofactor is Zn(2+).

The catalysed reaction is Hydrolysis of DNA containing ring-opened 7-methylguanine residues, releasing 2,6-diamino-4-hydroxy-5-(N-methyl)formamidopyrimidine.. It catalyses the reaction 2'-deoxyribonucleotide-(2'-deoxyribose 5'-phosphate)-2'-deoxyribonucleotide-DNA = a 3'-end 2'-deoxyribonucleotide-(2,3-dehydro-2,3-deoxyribose 5'-phosphate)-DNA + a 5'-end 5'-phospho-2'-deoxyribonucleoside-DNA + H(+). In terms of biological role, involved in base excision repair of DNA damaged by oxidation or by mutagenic agents. Acts as a DNA glycosylase that recognizes and removes damaged bases. Has a preference for oxidized purines, such as 7,8-dihydro-8-oxoguanine (8-oxoG). Has AP (apurinic/apyrimidinic) lyase activity and introduces nicks in the DNA strand. Cleaves the DNA backbone by beta-delta elimination to generate a single-strand break at the site of the removed base with both 3'- and 5'-phosphates. The polypeptide is Formamidopyrimidine-DNA glycosylase (Klebsiella pneumoniae subsp. pneumoniae (strain ATCC 700721 / MGH 78578)).